The sequence spans 137 residues: MLQPSNRKYRKDFKGRNRGIASRGNRVSFGEFGLKATECARITARQLEAARRTIARHIKRGGKITIRIFPDKPITKKPLEVRQGKGKGSVEYWVALVQPGRMIFEIEGVDEALAREAFSRAAAKLPLKCLFVKRTVM.

It belongs to the universal ribosomal protein uL16 family. Part of the 50S ribosomal subunit.

In terms of biological role, binds 23S rRNA and is also seen to make contacts with the A and possibly P site tRNAs. The chain is Large ribosomal subunit protein uL16 from Coxiella burnetii (strain RSA 331 / Henzerling II).